We begin with the raw amino-acid sequence, 156 residues long: Small ribosomal subunit protein uS7 (156 aa).

Belongs to the universal ribosomal protein uS7 family. As to quaternary structure, part of the 30S ribosomal subunit. Contacts proteins S9 and S11.

Functionally, one of the primary rRNA binding proteins, it binds directly to 16S rRNA where it nucleates assembly of the head domain of the 30S subunit. Is located at the subunit interface close to the decoding center, probably blocks exit of the E-site tRNA. The polypeptide is Small ribosomal subunit protein uS7 (Chelativorans sp. (strain BNC1)).